We begin with the raw amino-acid sequence, 144 residues long: 3-hydroxyacyl-[acyl-carrier-protein] dehydratase FabZ (144 aa).

Histidine 51 is a catalytic residue.

It belongs to the thioester dehydratase family. FabZ subfamily.

It localises to the cytoplasm. It carries out the reaction a (3R)-hydroxyacyl-[ACP] = a (2E)-enoyl-[ACP] + H2O. In terms of biological role, involved in unsaturated fatty acids biosynthesis. Catalyzes the dehydration of short chain beta-hydroxyacyl-ACPs and long chain saturated and unsaturated beta-hydroxyacyl-ACPs. In Lactococcus lactis subsp. lactis (strain IL1403) (Streptococcus lactis), this protein is 3-hydroxyacyl-[acyl-carrier-protein] dehydratase FabZ (fabZ2).